Here is a 420-residue protein sequence, read N- to C-terminus: Probable protein phosphatase 2C 76 (420 aa).

The PPM-type phosphatase domain maps to Ser101 to Phe347. Residues Asp137, Gly138, Asp299, and Asp338 each contribute to the Mn(2+) site. The tract at residues Glu353 to Glu420 is disordered. Over residues Pro403–Glu420 the composition is skewed to basic and acidic residues.

The protein belongs to the PP2C family. Mg(2+) serves as cofactor. It depends on Mn(2+) as a cofactor.

The enzyme catalyses O-phospho-L-seryl-[protein] + H2O = L-seryl-[protein] + phosphate. It carries out the reaction O-phospho-L-threonyl-[protein] + H2O = L-threonyl-[protein] + phosphate. The polypeptide is Probable protein phosphatase 2C 76 (Arabidopsis thaliana (Mouse-ear cress)).